Here is a 71-residue protein sequence, read N- to C-terminus: Disintegrin ussuristatin-2 (71 aa).

Residues 1–71 (EAGEECDCGA…QSADCPRNGF (71 aa)) enclose the Disintegrin domain. 6 cysteine pairs are disulfide-bonded: cysteine 6–cysteine 21, cysteine 8–cysteine 16, cysteine 15–cysteine 38, cysteine 29–cysteine 35, cysteine 34–cysteine 59, and cysteine 47–cysteine 66. The short motif at 51–53 (KGD) is the Cell attachment site; atypical (KGD) element.

It belongs to the venom metalloproteinase (M12B) family. P-II subfamily. P-IId sub-subfamily. Homodimer. Expressed by the venom gland.

The protein resides in the secreted. In terms of biological role, suppress platelet aggregation induced by ADP, collagen, thrombin, and epinephrine (IC(50)=170-330 nM). Also dose-dependently inhibits the adhesion of human melanoma cells to fibrinogen but not to fibronectin. This Gloydius ussuriensis (Ussuri mamushi) protein is Disintegrin ussuristatin-2.